A 465-amino-acid chain; its full sequence is Muscarinic acetylcholine receptor M2 (465 aa).

Topologically, residues 1–21 are extracellular; the sequence is MNNSTNSSNNVALTSPYKTFE. Asn2, Asn3, and Asn6 each carry an N-linked (GlcNAc...) asparagine glycan. The chain crosses the membrane as a helical span at residues 22–44; it reads VVFIVLVAGSLSLVTIIGNILVM. The Cytoplasmic portion of the chain corresponds to 45–58; sequence VSIKVNRHLQTVNN. The helical transmembrane segment at 59–79 threads the bilayer; that stretch reads YFLFSLACADLIIGVFSMNLY. Over 80-96 the chain is Extracellular; the sequence is TLYTVIGYWPLGPVVCD. Residues Cys95 and Cys175 are joined by a disulfide bond. The chain crosses the membrane as a helical span at residues 97 to 118; the sequence is LWLALDYVVSNASVMNLLIISF. Residues 119–121 carry the Important for signaling motif; sequence DRY. Residues 119-138 are Cytoplasmic-facing; the sequence is DRYFCVTKPLTYPVKRTTKM. The chain crosses the membrane as a helical span at residues 139–161; it reads AGMMIAAAWVLSFILWAPAILFW. At 162–183 the chain is on the extracellular side; it reads QFIVGVRTVEDGECYIQFFSNA. The chain crosses the membrane as a helical span at residues 184-208; sequence AVTFGTAIAAFYLPVIIMTVLYWHI. The Cytoplasmic portion of the chain corresponds to 209–386; it reads SRASKSRIKK…PPSREKKVTR (178 aa). Residues 217–319 form a disordered region; that stretch reads KKDKKEPVAN…SVGHSKDENS (103 aa). At Ser231 the chain carries Phosphoserine. The segment covering 253–269 has biased composition (basic and acidic residues); sequence GLEHNKIQNGKTPRDAV. Composition is skewed to polar residues over residues 283–292 and 303–312; these read NDSTSVSAVA and DENTVSTSVG. Residues 387 to 409 traverse the membrane as a helical segment; it reads TILAILLAFIITWAPYNVMVLIN. Residues 410-417 lie on the Extracellular side of the membrane; sequence TFCAPCIP. A disulfide bridge connects residues Cys412 and Cys415. A helical transmembrane segment spans residues 418–441; that stretch reads NTVWTIGYWLCYINSTINPACYAL. Positions 435-439 match the Important for signaling motif; sequence NPACY. Over 442–465 the chain is Cytoplasmic; the sequence is CNATFKKTFKHLLMCHYKNIGATR. A phosphothreonine mark is found at Thr445, Thr449, and Thr464.

The protein belongs to the G-protein coupled receptor 1 family. Muscarinic acetylcholine receptor subfamily. CHRM2 sub-subfamily. Interacts with ARRB1 and ARRB2. Interacts with RACK1; the interaction regulates CHRM2 internalization. Phosphorylated in response to agonist treatment.

The protein localises to the cell membrane. It is found in the postsynaptic cell membrane. The muscarinic acetylcholine receptor mediates various cellular responses, including inhibition of adenylate cyclase, breakdown of phosphoinositides and modulation of potassium channels through the action of G proteins. Primary transducing effect is adenylate cyclase inhibition. Signaling promotes phospholipase C activity, leading to the release of inositol trisphosphate (IP3); this then triggers calcium ion release into the cytosol. The polypeptide is Muscarinic acetylcholine receptor M2 (CHRM2) (Bos taurus (Bovine)).